Here is a 68-residue protein sequence, read N- to C-terminus: Conotoxin TsMMSK-021 (68 aa).

Positions 1–20 (MMSKLGVLLTICLLLFPLTA) are cleaved as a signal peptide. A propeptide spanning residues 21 to 50 (VPLDGDQHADRPADRMQDISSEQHPLFDPV) is cleaved from the precursor. 3 disulfide bridges follow: Cys53–Cys66, Cys54–Cys62, and Cys58–Cys65. Pro64 bears the 4-hydroxyproline mark.

Belongs to the conotoxin M superfamily. In terms of tissue distribution, expressed by the venom duct.

The protein resides in the secreted. The protein is Conotoxin TsMMSK-021 of Conus tessulatus (Tessellate cone).